Reading from the N-terminus, the 493-residue chain is Chitinase 1 (493 aa).

An N-terminal signal peptide occupies residues 1–20 (MISCNILGITIAAFITSTLA). Positions 27-318 (VNVMYYWGQN…HGSSAALGQA (292 aa)) constitute a GH18 domain. Glu-164 functions as the Proton donor in the catalytic mechanism.

The protein belongs to the glycosyl hydrolase 18 family. Chitinase class III subfamily.

The enzyme catalyses Random endo-hydrolysis of N-acetyl-beta-D-glucosaminide (1-&gt;4)-beta-linkages in chitin and chitodextrins.. This Rhizopus niveus protein is Chitinase 1 (CHI1).